A 209-amino-acid chain; its full sequence is Large ribosomal subunit protein uL3 (209 aa).

An N5-methylglutamine modification is found at Gln-150.

This sequence belongs to the universal ribosomal protein uL3 family. Part of the 50S ribosomal subunit. Forms a cluster with proteins L14 and L19. Methylated by PrmB.

In terms of biological role, one of the primary rRNA binding proteins, it binds directly near the 3'-end of the 23S rRNA, where it nucleates assembly of the 50S subunit. This is Large ribosomal subunit protein uL3 from Proteus mirabilis (strain HI4320).